Reading from the N-terminus, the 106-residue chain is Iron-sulfur cluster assembly protein CyaY (106 aa).

Belongs to the frataxin family.

Functionally, involved in iron-sulfur (Fe-S) cluster assembly. May act as a regulator of Fe-S biogenesis. This Photorhabdus laumondii subsp. laumondii (strain DSM 15139 / CIP 105565 / TT01) (Photorhabdus luminescens subsp. laumondii) protein is Iron-sulfur cluster assembly protein CyaY.